The primary structure comprises 119 residues: Integration host factor subunit alpha (119 aa).

Residues 96–119 (INGQQANGKMNGESAPSEFSAETE) form a disordered region.

This sequence belongs to the bacterial histone-like protein family. As to quaternary structure, heterodimer of an alpha and a beta chain.

Functionally, this protein is one of the two subunits of integration host factor, a specific DNA-binding protein that functions in genetic recombination as well as in transcriptional and translational control. The polypeptide is Integration host factor subunit alpha (Bradyrhizobium sp. (strain ORS 278)).